The primary structure comprises 86 residues: Large ribosomal subunit protein eL31 (86 aa).

Belongs to the eukaryotic ribosomal protein eL31 family.

The chain is Large ribosomal subunit protein eL31 from Methanopyrus kandleri (strain AV19 / DSM 6324 / JCM 9639 / NBRC 100938).